The primary structure comprises 108 residues: Evasin P1229 (108 aa).

Positions 1–31 (MEVRTFAFLQIVVFVALGIQLFAAVTDAADA) are cleaved as a signal peptide. Intrachain disulfides connect C41–C63, C45–C65, and C56–C76. An N-linked (GlcNAc...) asparagine glycan is attached at N44. Residues 88–108 (GDPNNSDLDAATPRHPDASSR) form a disordered region. An N-linked (GlcNAc...) asparagine glycan is attached at N91. The span at 99-108 (TPRHPDASSR) shows a compositional bias: basic and acidic residues.

It is found in the secreted. In terms of biological role, salivary chemokine-binding protein which binds to host chemokines CXCL1 and CXCL8. The sequence is that of Evasin P1229 from Ixodes ricinus (Common tick).